Here is a 277-residue protein sequence, read N- to C-terminus: Putative endonuclease (277 aa).

Functionally, putative endonuclease. This chain is Putative endonuclease, found in Escherichia coli (Enterobacteria phage T5).